The chain runs to 89 residues: Luqin-like RYamide peptides lury-1 (89 aa).

The N-terminal stretch at 1–19 (MLTRVPVLILAVIVMLALC) is a signal peptide. Residues 20–26 (QEPEKPE) constitute a propeptide that is removed on maturation. 2 positions are modified to tyrosine amide: Tyr-35 and Tyr-43. Positions 47–89 (SGNLMESSQNSLTEESSDVVCQLIDGKYICLPVDAVRFRPFFL) are excised as a propeptide.

In terms of tissue distribution, expressed in the M1 and M2 pharyngeal neurons from where the LURY-1-1 and LURY-1-2 peptides are secreted.

The protein localises to the secreted. Its function is as follows. Acts as a ligand for the npr-22 receptor and controls food-related processes including feeding, lifespan, egg-laying and roaming behavior. Secreted in the presence of food, leading to reduced feeding and roaming behavior and increased egg laying and lifespan. Activity may be latent under normal conditions but induced under conditions that cause hyperactivation of the pharynx such as abrupt refeeding after starvation. This is Luqin-like RYamide peptides lury-1 from Caenorhabditis elegans.